A 177-amino-acid polypeptide reads, in one-letter code: Large ribosomal subunit protein uL6 (177 aa).

Belongs to the universal ribosomal protein uL6 family. As to quaternary structure, part of the 50S ribosomal subunit.

This protein binds to the 23S rRNA, and is important in its secondary structure. It is located near the subunit interface in the base of the L7/L12 stalk, and near the tRNA binding site of the peptidyltransferase center. The sequence is that of Large ribosomal subunit protein uL6 from Chelativorans sp. (strain BNC1).